Here is a 322-residue protein sequence, read N- to C-terminus: MEDPVFTFGLIADVQYADIEDGENYLRTRRRYYRGSADLLRDAVLQWRRERVQCVVQLGDIIDGHNRRRDASDRALDTVMAELDACSVDVHHVWGNHEFYNFSRPSLLSSRLNSAQRTGTDTGSDLIGDDIYAYEFSPAPNFRFVLLDAYDLSVIGREEESEKHTHSWRILTQHNHNLQDLNLPPVSVGLEQRFVKFNGGFSEQQLQWLDAVLTLSDHKQERVLIFSHLPVHPCAADPICLAWNHEAVLSVLRSHQSVLCFIAGHDHDGGRCTDSSGAQHITLEGVIETPPHSHAFATAYLYEDRMVMKGRGRVEDLTITYS.

Positions 13, 15, 60, 96, 228, 265, and 267 each coordinate Zn(2+).

It belongs to the ADPRibase-Mn family. In terms of assembly, monomer. Mg(2+) serves as cofactor.

The enzyme catalyses CDP-choline + H2O = phosphocholine + CMP + 2 H(+). The catalysed reaction is ADP-D-ribose + H2O = D-ribose 5-phosphate + AMP + 2 H(+). It catalyses the reaction CDP-glycerol + H2O = sn-glycerol 3-phosphate + CMP + 2 H(+). Hydrolyzes ADP-ribose, IDP-ribose, CDP-glycerol, CDP-choline and CDP-ethanolamine, but not other non-reducing ADP-sugars or CDP-glucose. This chain is Manganese-dependent ADP-ribose/CDP-alcohol diphosphatase (adprm), found in Danio rerio (Zebrafish).